Here is a 270-residue protein sequence, read N- to C-terminus: Bis(5'-nucleosyl)-tetraphosphatase, symmetrical (270 aa).

Belongs to the Ap4A hydrolase family.

It catalyses the reaction P(1),P(4)-bis(5'-adenosyl) tetraphosphate + H2O = 2 ADP + 2 H(+). In terms of biological role, hydrolyzes diadenosine 5',5'''-P1,P4-tetraphosphate to yield ADP. This is Bis(5'-nucleosyl)-tetraphosphatase, symmetrical from Actinobacillus pleuropneumoniae serotype 5b (strain L20).